The following is a 410-amino-acid chain: Cysteine desulfurase IscS (410 aa).

Residues 80 to 81 (AT), Asn160, Gln188, and 208 to 210 (SGH) each bind pyridoxal 5'-phosphate. N6-(pyridoxal phosphate)lysine is present on Lys211. Thr248 provides a ligand contact to pyridoxal 5'-phosphate. Cys334 acts as the Cysteine persulfide intermediate in catalysis. Cys334 is a [2Fe-2S] cluster binding site.

It belongs to the class-V pyridoxal-phosphate-dependent aminotransferase family. NifS/IscS subfamily. In terms of assembly, homodimer. Forms a heterotetramer with IscU, interacts with other sulfur acceptors. Pyridoxal 5'-phosphate is required as a cofactor.

Its subcellular location is the cytoplasm. The enzyme catalyses (sulfur carrier)-H + L-cysteine = (sulfur carrier)-SH + L-alanine. It participates in cofactor biosynthesis; iron-sulfur cluster biosynthesis. Functionally, master enzyme that delivers sulfur to a number of partners involved in Fe-S cluster assembly, tRNA modification or cofactor biosynthesis. Catalyzes the removal of elemental sulfur atoms from cysteine to produce alanine. Functions as a sulfur delivery protein for Fe-S cluster synthesis onto IscU, an Fe-S scaffold assembly protein, as well as other S acceptor proteins. This is Cysteine desulfurase IscS from Rickettsia peacockii (strain Rustic).